Reading from the N-terminus, the 112-residue chain is UPF0235 protein RHE_CH03912 (112 aa).

It belongs to the UPF0235 family.

The protein is UPF0235 protein RHE_CH03912 of Rhizobium etli (strain ATCC 51251 / DSM 11541 / JCM 21823 / NBRC 15573 / CFN 42).